The primary structure comprises 352 residues: Nicotinate-nucleotide--dimethylbenzimidazole phosphoribosyltransferase (352 aa).

Catalysis depends on Glu-318, which acts as the Proton acceptor.

The protein belongs to the CobT family.

It catalyses the reaction 5,6-dimethylbenzimidazole + nicotinate beta-D-ribonucleotide = alpha-ribazole 5'-phosphate + nicotinate + H(+). Its pathway is nucleoside biosynthesis; alpha-ribazole biosynthesis; alpha-ribazole from 5,6-dimethylbenzimidazole: step 1/2. Its function is as follows. Catalyzes the synthesis of alpha-ribazole-5'-phosphate from nicotinate mononucleotide (NAMN) and 5,6-dimethylbenzimidazole (DMB). The polypeptide is Nicotinate-nucleotide--dimethylbenzimidazole phosphoribosyltransferase (Geobacter sulfurreducens (strain ATCC 51573 / DSM 12127 / PCA)).